Consider the following 121-residue polypeptide: Small ribosomal subunit protein uS13 (121 aa).

The segment at 92 to 121 (RKGLPVRGQSSKTNARTVKGPRKTVANKKK) is disordered. Basic residues predominate over residues 110–121 (KGPRKTVANKKK).

The protein belongs to the universal ribosomal protein uS13 family. Part of the 30S ribosomal subunit. Forms a loose heterodimer with protein S19. Forms two bridges to the 50S subunit in the 70S ribosome.

Located at the top of the head of the 30S subunit, it contacts several helices of the 16S rRNA. In the 70S ribosome it contacts the 23S rRNA (bridge B1a) and protein L5 of the 50S subunit (bridge B1b), connecting the 2 subunits; these bridges are implicated in subunit movement. Contacts the tRNAs in the A and P-sites. This is Small ribosomal subunit protein uS13 from Mycoplasma capricolum subsp. capricolum (strain California kid / ATCC 27343 / NCTC 10154).